The sequence spans 330 residues: D-xylose-binding periplasmic protein (330 aa).

The first 23 residues, 1–23 (MKIKNILLTLCTSLLLTNVAAHA), serve as a signal peptide directing secretion.

This sequence belongs to the bacterial solute-binding protein 2 family.

It localises to the periplasm. Involved in the high-affinity D-xylose membrane transport system. Binds with high affinity to xylose. The polypeptide is D-xylose-binding periplasmic protein (xylF) (Escherichia coli (strain K12)).